Reading from the N-terminus, the 301-residue chain is GTPase Era (301 aa).

An Era-type G domain is found at 7–175 (YCGFIAIVGR…AAIVRKHLPE (169 aa)). Residues 15–22 (GRPNVGKS) are G1. 15–22 (GRPNVGKS) contributes to the GTP binding site. The G2 stretch occupies residues 41–45 (QTTRH). A G3 region spans residues 62 to 65 (DTPG). GTP is bound by residues 62 to 66 (DTPGL) and 124 to 127 (NKVD). Positions 124-127 (NKVD) are G4. The tract at residues 154-156 (ISA) is G5. One can recognise a KH type-2 domain in the interval 206 to 283 (LGAELPYSVT…HLELWVKVKS (78 aa)).

The protein belongs to the TRAFAC class TrmE-Era-EngA-EngB-Septin-like GTPase superfamily. Era GTPase family. In terms of assembly, monomer.

It is found in the cytoplasm. Its subcellular location is the cell inner membrane. Its function is as follows. An essential GTPase that binds both GDP and GTP, with rapid nucleotide exchange. Plays a role in 16S rRNA processing and 30S ribosomal subunit biogenesis and possibly also in cell cycle regulation and energy metabolism. The sequence is that of GTPase Era from Escherichia coli O157:H7.